The primary structure comprises 1207 residues: DNA-directed RNA polymerase subunit beta' (1207 aa).

Zn(2+)-binding residues include Cys60, Cys62, Cys75, and Cys78. Mg(2+)-binding residues include Asp449, Asp451, and Asp453. Zn(2+) is bound by residues Cys822, Cys896, Cys903, and Cys906.

This sequence belongs to the RNA polymerase beta' chain family. In terms of assembly, the RNAP catalytic core consists of 2 alpha, 1 beta, 1 beta' and 1 omega subunit. When a sigma factor is associated with the core the holoenzyme is formed, which can initiate transcription. Requires Mg(2+) as cofactor. It depends on Zn(2+) as a cofactor.

It catalyses the reaction RNA(n) + a ribonucleoside 5'-triphosphate = RNA(n+1) + diphosphate. DNA-dependent RNA polymerase catalyzes the transcription of DNA into RNA using the four ribonucleoside triphosphates as substrates. This Staphylococcus epidermidis (strain ATCC 35984 / DSM 28319 / BCRC 17069 / CCUG 31568 / BM 3577 / RP62A) protein is DNA-directed RNA polymerase subunit beta'.